Consider the following 224-residue polypeptide: 2-C-methyl-D-erythritol 4-phosphate cytidylyltransferase (224 aa).

This sequence belongs to the IspD/TarI cytidylyltransferase family. IspD subfamily.

The enzyme catalyses 2-C-methyl-D-erythritol 4-phosphate + CTP + H(+) = 4-CDP-2-C-methyl-D-erythritol + diphosphate. It participates in isoprenoid biosynthesis; isopentenyl diphosphate biosynthesis via DXP pathway; isopentenyl diphosphate from 1-deoxy-D-xylulose 5-phosphate: step 2/6. Functionally, catalyzes the formation of 4-diphosphocytidyl-2-C-methyl-D-erythritol from CTP and 2-C-methyl-D-erythritol 4-phosphate (MEP). The chain is 2-C-methyl-D-erythritol 4-phosphate cytidylyltransferase from Clostridium botulinum (strain Eklund 17B / Type B).